We begin with the raw amino-acid sequence, 555 residues long: Putative polyketide hydroxylase (555 aa).

FAD contacts are provided by residues 16–45 and 303–313; these read PVLV…LVER and YRAGRVFLAGD. The segment at 366–395 is disordered; the sequence is ATTARAAARSAEHSHPGFAPPPGTSGGPQG.

Belongs to the PheA/TfdB FAD monooxygenase family. Requires FAD as cofactor.

In terms of biological role, involved in developmentally regulated synthesis of a compound biosynthetically related to polyketide antibiotics which is essential for spore color in Streptomyces halstedii. This Streptomyces halstedii protein is Putative polyketide hydroxylase (schC).